Reading from the N-terminus, the 183-residue chain is Large ribosomal subunit protein uL5 (183 aa).

This sequence belongs to the universal ribosomal protein uL5 family. Part of the 50S ribosomal subunit; part of the 5S rRNA/L5/L18/L25 subcomplex. Contacts the 5S rRNA and the P site tRNA. Forms a bridge to the 30S subunit in the 70S ribosome.

Its function is as follows. This is one of the proteins that bind and probably mediate the attachment of the 5S RNA into the large ribosomal subunit, where it forms part of the central protuberance. In the 70S ribosome it contacts protein S13 of the 30S subunit (bridge B1b), connecting the 2 subunits; this bridge is implicated in subunit movement. Contacts the P site tRNA; the 5S rRNA and some of its associated proteins might help stabilize positioning of ribosome-bound tRNAs. This chain is Large ribosomal subunit protein uL5, found in Pseudothermotoga lettingae (strain ATCC BAA-301 / DSM 14385 / NBRC 107922 / TMO) (Thermotoga lettingae).